We begin with the raw amino-acid sequence, 362 residues long: Glycyl-glycine endopeptidase ALE-1 (362 aa).

Residues 1–35 form the signal peptide; it reads MDTNRKFTLVKSLSIGLGTFLVGSVFLTVNDEASA. The tract at residues 35 to 110 is disordered; that stretch reads ASTKVDAPKV…PAKADAPKVE (76 aa). The span at 40–110 shows a compositional bias: basic and acidic residues; sequence DAPKVEQEAP…PAKADAPKVE (71 aa). H150 and D154 together coordinate Zn(2+). Residue H231 is part of the active site. H233 is a binding site for Zn(2+). The 69-residue stretch at 282 to 350 folds into the SH3b domain; sequence SESASFTANT…YLPVRTWNES (69 aa).

This sequence belongs to the peptidase M23B family. Zn(2+) serves as cofactor.

It is found in the secreted. It carries out the reaction Hydrolysis of the -Gly-|-Gly- bond in the pentaglycine inter-peptide link joining staphylococcal cell wall peptidoglycans.. Functionally, lyses staphylococcal cells by hydrolyzing the polyglycine interpeptide bridges of the peptidoglycan. This chain is Glycyl-glycine endopeptidase ALE-1, found in Staphylococcus capitis.